A 218-amino-acid polypeptide reads, in one-letter code: MGQKINPLGFRLGENQSHHSLWFAQPKSYCRGLQEDEKIRDCIKIYVQKNMRISSGFEGIAHIEIQKKMDLIQVIISIGFPNFLIEGGTRGIEELQMNVQKRFHSANRRLNIAITRVAKPYGQPNILAEYIARQLKNRVSFRKAMKKVIELTEQADTKGIQVQIAGRIDGKEIARVEWIREGRVPLQTIRAKIDHCSYTVRTIYGVLGIKIWIFVDEQ.

The region spanning 47 to 118 (VQKNMRISSG…RLNIAITRVA (72 aa)) is the KH type-2 domain.

This sequence belongs to the universal ribosomal protein uS3 family. Part of the 30S ribosomal subunit.

It localises to the plastid. The protein resides in the chloroplast. The sequence is that of Small ribosomal subunit protein uS3c (rps3) from Calycanthus floridus var. glaucus (Eastern sweetshrub).